The following is a 651-amino-acid chain: Intraflagellar transport protein 70A (651 aa).

TPR repeat units follow at residues 8-41 (DGEY…QYRS), 42-75 (RAGL…SPEV), 140-173 (PESE…MGYK), 175-207 (DLSF…GIRE), 372-405 (LTEQ…YDET), 410-443 (IPVL…CNEH), and 445-478 (IWKL…HYDN). A coiled-coil region spans residues 494-521 (YIMTSQNEEAEELMRKIEKEEEQIAYEN). A TPR 8 repeat occupies 530-563 (CIVNLVIGTLYCAKGNYEFGISRVIKSLEPYNKK).

It belongs to the TTC30/dfy-1/fleer family.

The protein localises to the cell projection. It is found in the cilium. In terms of biological role, required for polyglutamylation of axonemal tubulin. Plays a role in anterograde intraflagellar transport (IFT), the process by which cilia precursors are transported from the base of the cilium to the site of their incorporation at the tip. This chain is Intraflagellar transport protein 70A (ift70a), found in Xenopus laevis (African clawed frog).